Here is a 189-residue protein sequence, read N- to C-terminus: Glucose-6-phosphate isomerase (189 aa).

Residues His-88, His-90, Glu-97, and His-136 each contribute to the Fe cation site.

This sequence belongs to the archaeal-type GPI family. Homodimer.

It localises to the cytoplasm. It carries out the reaction alpha-D-glucose 6-phosphate = beta-D-fructose 6-phosphate. The protein operates within carbohydrate degradation; glycolysis; D-glyceraldehyde 3-phosphate and glycerone phosphate from D-glucose: step 2/4. The polypeptide is Glucose-6-phosphate isomerase (Thermococcus gammatolerans (strain DSM 15229 / JCM 11827 / EJ3)).